The following is a 465-amino-acid chain: Sodium-dependent phosphate transport protein 1 (465 aa).

N-linked (GlcNAc...) asparagine glycans are attached at residues Asn39, Asn47, and Asn56. 10 helical membrane-spanning segments follow: residues 79–99 (GLVL…VGYL), 117–137 (SVLS…VIVC), 176–196 (FVMG…LLGW), 199–219 (VFYI…ILLF), 260–280 (LPLW…NLLV), 299–319 (GLLS…AGQM), 337–357 (LFTT…LYLS), 363–383 (TVIF…GQLI), 399–419 (VTAL…GLIL), and 431–451 (FFLM…FAKG).

It belongs to the major facilitator superfamily. Sodium/anion cotransporter family. In terms of assembly, interacts with PDZK1.

The protein localises to the apical cell membrane. The enzyme catalyses 3 Na(+)(out) + phosphate(out) = 3 Na(+)(in) + phosphate(in). The catalysed reaction is urate(out) = urate(in). In terms of biological role, important for the resorption of phosphate by the kidney. May be involved in actively transporting phosphate into cells via Na(+) cotransport in the renal brush border membrane. Plays a role in urate transport in the kidney. The polypeptide is Sodium-dependent phosphate transport protein 1 (Slc17a1) (Rattus norvegicus (Rat)).